The sequence spans 275 residues: 2,3,4,5-tetrahydropyridine-2,6-dicarboxylate N-succinyltransferase (275 aa).

Residues Arg105 and Asp142 each contribute to the substrate site.

Belongs to the transferase hexapeptide repeat family. In terms of assembly, homotrimer.

The protein resides in the cytoplasm. It catalyses the reaction (S)-2,3,4,5-tetrahydrodipicolinate + succinyl-CoA + H2O = (S)-2-succinylamino-6-oxoheptanedioate + CoA. The protein operates within amino-acid biosynthesis; L-lysine biosynthesis via DAP pathway; LL-2,6-diaminopimelate from (S)-tetrahydrodipicolinate (succinylase route): step 1/3. The polypeptide is 2,3,4,5-tetrahydropyridine-2,6-dicarboxylate N-succinyltransferase (Histophilus somni (strain 129Pt) (Haemophilus somnus)).